The chain runs to 125 residues: UPF0231 protein APP7_1023 (125 aa).

Belongs to the UPF0231 family.

The sequence is that of UPF0231 protein APP7_1023 from Actinobacillus pleuropneumoniae serotype 7 (strain AP76).